Reading from the N-terminus, the 575-residue chain is Dihydroxy-acid dehydratase (575 aa).

Residues 1–25 (MPTTDSARAADIKQPDIKPRSRDVT) form a disordered region. Basic and acidic residues predominate over residues 8-25 (RAADIKQPDIKPRSRDVT). Position 64 (cysteine 64) interacts with [2Fe-2S] cluster. Mg(2+) is bound at residue aspartate 96. Cysteine 137 contacts [2Fe-2S] cluster. Positions 138 and 139 each coordinate Mg(2+). The residue at position 139 (lysine 139) is an N6-carboxylysine. Cysteine 214 contributes to the [2Fe-2S] cluster binding site. Glutamate 465 is a Mg(2+) binding site. Catalysis depends on serine 491, which acts as the Proton acceptor.

The protein belongs to the IlvD/Edd family. In terms of assembly, homodimer. Requires [2Fe-2S] cluster as cofactor. Mg(2+) is required as a cofactor.

It catalyses the reaction (2R)-2,3-dihydroxy-3-methylbutanoate = 3-methyl-2-oxobutanoate + H2O. The enzyme catalyses (2R,3R)-2,3-dihydroxy-3-methylpentanoate = (S)-3-methyl-2-oxopentanoate + H2O. Its pathway is amino-acid biosynthesis; L-isoleucine biosynthesis; L-isoleucine from 2-oxobutanoate: step 3/4. It functions in the pathway amino-acid biosynthesis; L-valine biosynthesis; L-valine from pyruvate: step 3/4. In terms of biological role, functions in the biosynthesis of branched-chain amino acids. Catalyzes the dehydration of (2R,3R)-2,3-dihydroxy-3-methylpentanoate (2,3-dihydroxy-3-methylvalerate) into 2-oxo-3-methylpentanoate (2-oxo-3-methylvalerate) and of (2R)-2,3-dihydroxy-3-methylbutanoate (2,3-dihydroxyisovalerate) into 2-oxo-3-methylbutanoate (2-oxoisovalerate), the penultimate precursor to L-isoleucine and L-valine, respectively. The polypeptide is Dihydroxy-acid dehydratase (Mycobacterium avium (strain 104)).